The sequence spans 336 residues: 4-hydroxy-3-methylbut-2-enyl diphosphate reductase (336 aa).

C37 serves as a coordination point for [4Fe-4S] cluster. 2 residues coordinate (2E)-4-hydroxy-3-methylbut-2-enyl diphosphate: H66 and H99. Dimethylallyl diphosphate is bound by residues H66 and H99. Isopentenyl diphosphate-binding residues include H66 and H99. Position 121 (C121) interacts with [4Fe-4S] cluster. H149 contacts (2E)-4-hydroxy-3-methylbut-2-enyl diphosphate. H149 lines the dimethylallyl diphosphate pocket. H149 contacts isopentenyl diphosphate. The active-site Proton donor is the E151. T189 contacts (2E)-4-hydroxy-3-methylbut-2-enyl diphosphate. Position 219 (C219) interacts with [4Fe-4S] cluster. S247, S248, N249, and S292 together coordinate (2E)-4-hydroxy-3-methylbut-2-enyl diphosphate. 4 residues coordinate dimethylallyl diphosphate: S247, S248, N249, and S292. Isopentenyl diphosphate is bound by residues S247, S248, N249, and S292.

Belongs to the IspH family. It depends on [4Fe-4S] cluster as a cofactor.

The enzyme catalyses isopentenyl diphosphate + 2 oxidized [2Fe-2S]-[ferredoxin] + H2O = (2E)-4-hydroxy-3-methylbut-2-enyl diphosphate + 2 reduced [2Fe-2S]-[ferredoxin] + 2 H(+). It carries out the reaction dimethylallyl diphosphate + 2 oxidized [2Fe-2S]-[ferredoxin] + H2O = (2E)-4-hydroxy-3-methylbut-2-enyl diphosphate + 2 reduced [2Fe-2S]-[ferredoxin] + 2 H(+). It functions in the pathway isoprenoid biosynthesis; dimethylallyl diphosphate biosynthesis; dimethylallyl diphosphate from (2E)-4-hydroxy-3-methylbutenyl diphosphate: step 1/1. The protein operates within isoprenoid biosynthesis; isopentenyl diphosphate biosynthesis via DXP pathway; isopentenyl diphosphate from 1-deoxy-D-xylulose 5-phosphate: step 6/6. Functionally, catalyzes the conversion of 1-hydroxy-2-methyl-2-(E)-butenyl 4-diphosphate (HMBPP) into a mixture of isopentenyl diphosphate (IPP) and dimethylallyl diphosphate (DMAPP). Acts in the terminal step of the DOXP/MEP pathway for isoprenoid precursor biosynthesis. This is 4-hydroxy-3-methylbut-2-enyl diphosphate reductase from Rhodococcus jostii (strain RHA1).